A 431-amino-acid chain; its full sequence is MKRLLFFLICVFFSKTSYSNVDISINKGIDISTPIGISSFEWVEVNENNNYENISKIISCDLQNSGKFSPIEIYKESNKSIEKQIKNNSINLNKLNINTILTGKISLNYNGEYLISYKLIDLVNYPGKILLSGYRTVHLQSFRKVAHEISNEIFKKLTGIQGVFHTRIAYILYNKNNEYKYKLCISDYDGYNQNIIHQSNMPLMSPSWSPDGKKIAYVTFEKGSSEIKIKDIKTGSIKHISSFPYHNGAPAFSPNGENLAFALSKTGSLNLYVMNLKNGYIKQITHGNSNNTEPSWFPDNNSLAYTSDQSGTPQIYKINISNGKFNRLSWLGSKNQNANVSPDGKFIAMVNSEKKSQHIALFDINMDNAKIITETFLDEAPSISPNNVMIIYTSSYGDSSVIELISTNGRFKTSILKINGQIKFPAWSQKI.

A signal peptide spans 1–19; sequence MKRLLFFLICVFFSKTSYS.

It belongs to the TolB family. As to quaternary structure, the Tol-Pal system is composed of five core proteins: the inner membrane proteins TolA, TolQ and TolR, the periplasmic protein TolB and the outer membrane protein Pal. They form a network linking the inner and outer membranes and the peptidoglycan layer.

It localises to the periplasm. Functionally, part of the Tol-Pal system, which plays a role in outer membrane invagination during cell division and is important for maintaining outer membrane integrity. TolB occupies a key intermediary position in the Tol-Pal system because it communicates directly with both membrane-embedded components, Pal in the outer membrane and TolA in the inner membrane. The chain is Tol-Pal system protein TolB from Wigglesworthia glossinidia brevipalpis.